The chain runs to 203 residues: Large ribosomal subunit protein bL25 (203 aa).

It belongs to the bacterial ribosomal protein bL25 family. CTC subfamily. As to quaternary structure, part of the 50S ribosomal subunit; part of the 5S rRNA/L5/L18/L25 subcomplex. Contacts the 5S rRNA. Binds to the 5S rRNA independently of L5 and L18.

Its function is as follows. This is one of the proteins that binds to the 5S RNA in the ribosome where it forms part of the central protuberance. This is Large ribosomal subunit protein bL25 from Cupriavidus metallidurans (strain ATCC 43123 / DSM 2839 / NBRC 102507 / CH34) (Ralstonia metallidurans).